Here is a 105-residue protein sequence, read N- to C-terminus: Met repressor (105 aa).

Belongs to the MetJ family. Homodimer.

The protein resides in the cytoplasm. Its function is as follows. This regulatory protein, when combined with SAM (S-adenosylmethionine) represses the expression of the methionine regulon and of enzymes involved in SAM synthesis. In Pectobacterium carotovorum subsp. carotovorum (strain PC1), this protein is Met repressor.